We begin with the raw amino-acid sequence, 257 residues long: UPF0246 protein ASA_3634 (257 aa).

It belongs to the UPF0246 family.

The chain is UPF0246 protein ASA_3634 from Aeromonas salmonicida (strain A449).